A 59-amino-acid polypeptide reads, in one-letter code: Ferredoxin-2 (59 aa).

2 4Fe-4S ferredoxin-type domains span residues 3–32 (YSVI…LQNG) and 33–59 (KAVP…AIVE). [4Fe-4S] cluster-binding residues include Cys-12, Cys-15, Cys-18, Cys-22, Cys-42, Cys-45, Cys-48, and Cys-52.

In terms of assembly, homodimer. It depends on [4Fe-4S] cluster as a cofactor.

Its subcellular location is the periplasm. In terms of biological role, ferredoxins are iron-sulfur proteins that transfer electrons in a wide variety of metabolic reactions. This chain is Ferredoxin-2, found in Desulfomicrobium norvegicum (strain DSM 1741 / NCIMB 8310) (Desulfovibrio baculatus (strain Norway 4)).